Here is a 717-residue protein sequence, read N- to C-terminus: uncharacterized protein (717 aa).

The protein belongs to the asfivirus C717R family.

The protein resides in the virion. This is an uncharacterized protein from African swine fever virus (strain Badajoz 1971 Vero-adapted) (Ba71V).